Here is a 224-residue protein sequence, read N- to C-terminus: Twisted gastrulation protein homolog 1 (224 aa).

An N-terminal signal peptide occupies residues 1–26; sequence MRSPCAALSASLLLLLLLLWARSSVG. 3 N-linked (GlcNAc...) asparagine glycosylation sites follow: N53, N82, and N148.

This sequence belongs to the twisted gastrulation protein family. In terms of assembly, interacts with CHRD and BMP4. This interaction enhances CHRD/BMP4 complex formation. Interacts with BMP7.

It localises to the secreted. Its function is as follows. May be involved in dorsoventral axis formation. Seems to antagonize BMP signaling by forming ternary complexes with CHRD and BMPs, thereby preventing BMPs from binding to their receptors. In addition to the anti-BMP function, also has pro-BMP activity, partly mediated by cleavage and degradation of CHRD, which releases BMPs from ternary complexes. May be an important modulator of BMP-regulated cartilage development and chondrocyte differentiation. May play a role in thymocyte development. This is Twisted gastrulation protein homolog 1 (TWSG1) from Gallus gallus (Chicken).